The sequence spans 266 residues: 4-hydroxy-tetrahydrodipicolinate reductase (266 aa).

Residues 8 to 13 (GAAGRM) and glutamate 33 contribute to the NAD(+) site. Residue arginine 34 participates in NADP(+) binding. NAD(+) contacts are provided by residues 97-99 (GST) and 121-124 (APNM). The active-site Proton donor/acceptor is the histidine 154. Histidine 155 is a binding site for (S)-2,3,4,5-tetrahydrodipicolinate. Residue lysine 158 is the Proton donor of the active site. 164-165 (GT) is a binding site for (S)-2,3,4,5-tetrahydrodipicolinate.

Belongs to the DapB family.

It localises to the cytoplasm. It catalyses the reaction (S)-2,3,4,5-tetrahydrodipicolinate + NAD(+) + H2O = (2S,4S)-4-hydroxy-2,3,4,5-tetrahydrodipicolinate + NADH + H(+). It carries out the reaction (S)-2,3,4,5-tetrahydrodipicolinate + NADP(+) + H2O = (2S,4S)-4-hydroxy-2,3,4,5-tetrahydrodipicolinate + NADPH + H(+). Its pathway is amino-acid biosynthesis; L-lysine biosynthesis via DAP pathway; (S)-tetrahydrodipicolinate from L-aspartate: step 4/4. Its function is as follows. Catalyzes the conversion of 4-hydroxy-tetrahydrodipicolinate (HTPA) to tetrahydrodipicolinate. This is 4-hydroxy-tetrahydrodipicolinate reductase from Trichlorobacter lovleyi (strain ATCC BAA-1151 / DSM 17278 / SZ) (Geobacter lovleyi).